Reading from the N-terminus, the 287-residue chain is Pol-RFamide neuropeptides (287 aa).

The signal sequence occupies residues 1-21 (MNLITLLVLGVSTCLIYGIEA). Residues 22–52 (DEKTSSALENEIVEILNGNFKNEKKSIETSD) constitute a propeptide that is removed on maturation. Gln-53 is subject to Pyrrolidone carboxylic acid. Phe-59 is modified (phenylalanine amide). A propeptide spanning residues 62–64 (EVN) is cleaved from the precursor. Position 65 is a pyrrolidone carboxylic acid (Gln-65). Residue Phe-71 is modified to Phenylalanine amide. The propeptide occupies 74-77 (ELSD). Position 78 is a pyrrolidone carboxylic acid (Gln-78). Phe-84 bears the Phenylalanine amide mark. The propeptide occupies 87-90 (ELSD). Gln-91 is subject to Pyrrolidone carboxylic acid. Residue Phe-97 is modified to Phenylalanine amide. The propeptide occupies 100–103 (EVLD). Position 104 is a pyrrolidone carboxylic acid (Gln-104). Residue Phe-110 is modified to Phenylalanine amide. Residues 113-116 (DASN) constitute a propeptide that is removed on maturation. Gln-117 carries the post-translational modification Pyrrolidone carboxylic acid. Phe-123 carries the phenylalanine amide modification. A propeptide spanning residues 126–129 (ELSD) is cleaved from the precursor. At Gln-130 the chain carries Pyrrolidone carboxylic acid. A Phenylalanine amide modification is found at Phe-136. A propeptide spanning residues 139–142 (EGSN) is cleaved from the precursor. Gln-143 carries the post-translational modification Pyrrolidone carboxylic acid. Phe-149 carries the phenylalanine amide modification. Residues 152–168 (EASKNDLEKQNGRGDSD) constitute a propeptide that is removed on maturation. Gln-169 carries the post-translational modification Pyrrolidone carboxylic acid. Phe-175 carries the post-translational modification Phenylalanine amide. The propeptide occupies 178-181 (EARK). Gln-182 carries the pyrrolidone carboxylic acid modification. Phe-188 is subject to Phenylalanine amide. Positions 192 to 194 (DMN) are excised as a propeptide. Pyrrolidone carboxylic acid is present on Gln-195. Residue His-201 is modified to Histidine amide. Residues 204–207 (ETSD) constitute a propeptide that is removed on maturation. At Gln-208 the chain carries Pyrrolidone carboxylic acid. At Phe-214 the chain carries Phenylalanine amide. Positions 217–220 (QLSD) are excised as a propeptide. Position 221 is a pyrrolidone carboxylic acid (Gln-221). A Phenylalanine amide modification is found at Phe-227. The segment at 229–267 (REVKNDKNNPFRSRYTGDSTQLQRENNQPIEELRDNTEK) is disordered. A propeptide spanning residues 230–287 (EVKNDKNNPFRSRYTGDSTQLQRENNQPIEELRDNTEKVSIENKPIMKKTSVKISKTV) is cleaved from the precursor. A compositionally biased stretch (polar residues) spans 238–257 (PFRSRYTGDSTQLQRENNQP).

The protein belongs to the FARP (FMRFamide related peptide) family. Post-translationally, the N-terminal processing sites of the Pol-RFamide peptides are acidic suggesting that cniderian nervous systems may use a variety of unconventional processing procedures.

The protein resides in the secreted. Has direct action on motoneurons, and effect includes transient inhibition followed by prolonged excitation. This is Pol-RFamide neuropeptides from Polyorchis penicillatus (Hydromedusa).